A 230-amino-acid chain; its full sequence is Large ribosomal subunit protein uL3 (230 aa).

Disordered regions lie at residues 125 to 149 (QAIG…SLGD) and 210 to 230 (PNPK…VKNE).

Belongs to the universal ribosomal protein uL3 family. In terms of assembly, part of the 50S ribosomal subunit. Forms a cluster with proteins L14 and L19.

In terms of biological role, one of the primary rRNA binding proteins, it binds directly near the 3'-end of the 23S rRNA, where it nucleates assembly of the 50S subunit. The protein is Large ribosomal subunit protein uL3 of Mesomycoplasma hyopneumoniae (strain J / ATCC 25934 / NCTC 10110) (Mycoplasma hyopneumoniae).